A 426-amino-acid polypeptide reads, in one-letter code: Protein PHOSPHATE STARVATION RESPONSE 2 (426 aa).

Disordered regions lie at residues 27 to 81 (ATLD…PLRS), 96 to 123 (YTNANPYNSQPPSSGSSSTLNYGSQYGG), and 198 to 247 (TQPQ…NSKT). The segment covering 69–81 (FQSSTGSVGPLRS) has biased composition (polar residues). Low complexity-rich tracts occupy residues 102-119 (YNSQPPSSGSSSTLNYGS) and 205-225 (AAQSSVAVHQSAAQQSVSSQS). A compositionally biased stretch (polar residues) spans 237 to 246 (SGASNTSNSK). The HTH myb-type domain maps to 243 to 303 (SNSKTRMRWT…HLQKYRTARY (61 aa)). A DNA-binding region (H-T-H motif) is located at residues 274–299 (PKGVLKLMKADNLTIYHVKSHLQKYR). Disordered regions lie at residues 302-326 (RYRPELSEGSSEKKAASKEDIPSID) and 382-426 (DKAV…SGDR). Basic and acidic residues predominate over residues 303-322 (YRPELSEGSSEKKAASKEDI). Polar residues-rich tracts occupy residues 387 to 401 (ASTSAEGTKPSSDLP) and 411 to 426 (ENSQNGIAKQTESGDR).

In terms of assembly, interacts (via C-terminus) with SPX4 (via N-terminus) in the presence of inositol polyphosphate. Interacts (via C-terminus) with SPX1 and SPX2 (via SPX domain). Interacts with RLI1 in the nucleus.

It localises to the nucleus. It is found in the cytoplasm. Transcription factor involved in phosphate starvation signaling. Binds to P1BS, an imperfect palindromic sequence 5'-GNATATNC-3', to promote the expression of inorganic phosphate (Pi) starvation-responsive genes. Functionally redundant with PHR1 and PHR3 in regulating Pi starvation response and Pi homeostasis. Involved in both systematic and local Pi-signaling pathways. Regulates several Pi transporters. PHR2 binding to DNA is repressed redundantly by SPX1, SPX2 and SPX4 in a PI-dependent manner. The DNA-binding activity is also repressed by SPX4. Involved in root growth under Pi deprivation. Involved in the modulation of Pi response and homeostasis together with RLI1; promotes RLI1 expression in response to nitrate availability, thus triggering the nitrate-induced phosphate response (NIPR). This chain is Protein PHOSPHATE STARVATION RESPONSE 2, found in Oryza sativa subsp. indica (Rice).